Here is a 371-residue protein sequence, read N- to C-terminus: Queuine tRNA-ribosyltransferase (371 aa).

The active-site Proton acceptor is Asp-90. Residues 90-94, Asp-144, Gln-188, and Gly-215 each bind substrate; that span reads DSGGF. The RNA binding stretch occupies residues 246–252; it reads GVGTPED. Residue Asp-265 is the Nucleophile of the active site. The interval 270-274 is RNA binding; important for wobble base 34 recognition; the sequence is TRNAR. Zn(2+) contacts are provided by Cys-303, Cys-305, Cys-308, and His-334.

It belongs to the queuine tRNA-ribosyltransferase family. In terms of assembly, homodimer. Within each dimer, one monomer is responsible for RNA recognition and catalysis, while the other monomer binds to the replacement base PreQ1. Requires Zn(2+) as cofactor.

The catalysed reaction is 7-aminomethyl-7-carbaguanine + guanosine(34) in tRNA = 7-aminomethyl-7-carbaguanosine(34) in tRNA + guanine. It functions in the pathway tRNA modification; tRNA-queuosine biosynthesis. Catalyzes the base-exchange of a guanine (G) residue with the queuine precursor 7-aminomethyl-7-deazaguanine (PreQ1) at position 34 (anticodon wobble position) in tRNAs with GU(N) anticodons (tRNA-Asp, -Asn, -His and -Tyr). Catalysis occurs through a double-displacement mechanism. The nucleophile active site attacks the C1' of nucleotide 34 to detach the guanine base from the RNA, forming a covalent enzyme-RNA intermediate. The proton acceptor active site deprotonates the incoming PreQ1, allowing a nucleophilic attack on the C1' of the ribose to form the product. After dissociation, two additional enzymatic reactions on the tRNA convert PreQ1 to queuine (Q), resulting in the hypermodified nucleoside queuosine (7-(((4,5-cis-dihydroxy-2-cyclopenten-1-yl)amino)methyl)-7-deazaguanosine). The polypeptide is Queuine tRNA-ribosyltransferase (Chromobacterium violaceum (strain ATCC 12472 / DSM 30191 / JCM 1249 / CCUG 213 / NBRC 12614 / NCIMB 9131 / NCTC 9757 / MK)).